A 285-amino-acid polypeptide reads, in one-letter code: Probable endonuclease 4 (285 aa).

Positions 69, 109, 145, 179, 182, 216, 229, 231, and 261 each coordinate Zn(2+).

This sequence belongs to the AP endonuclease 2 family. It depends on Zn(2+) as a cofactor.

It catalyses the reaction Endonucleolytic cleavage to 5'-phosphooligonucleotide end-products.. Endonuclease IV plays a role in DNA repair. It cleaves phosphodiester bonds at apurinic or apyrimidinic (AP) sites, generating a 3'-hydroxyl group and a 5'-terminal sugar phosphate. This chain is Probable endonuclease 4, found in Cronobacter sakazakii (strain ATCC BAA-894) (Enterobacter sakazakii).